The primary structure comprises 860 residues: DNA primase (860 aa).

The segment at 804–842 adopts a CHC2-type zinc-finger fold; sequence CLNRQHRGNRDNVLVYIQLKADGNRLILILWSTCFATKC.

The protein belongs to the herpesviridae DNA primase family. As to quaternary structure, associates with the helicase and the primase-associated factor to form the helicase-primase factor.

The protein localises to the host nucleus. Its function is as follows. Essential component of the helicase/primase complex. Unwinds the DNA at the replication forks and generates single-stranded DNA for both leading and lagging strand synthesis. The primase initiates primer synthesis and thereby produces large amount of short RNA primers on the lagging strand that the polymerase elongates using dNTPs. In Homo sapiens (Human), this protein is DNA primase (U43).